The sequence spans 236 residues: Small ribosomal subunit protein uS2c (236 aa).

It belongs to the universal ribosomal protein uS2 family.

The protein localises to the plastid. Its subcellular location is the chloroplast. This Illicium oligandrum (Star anise) protein is Small ribosomal subunit protein uS2c (rps2).